A 685-amino-acid polypeptide reads, in one-letter code: MKTALVFAAVVAFVAARFPDHKDYKQLADKQFLAKQRDVLRLFHRVHQHNILNDQVEVGIPMTSKQTSATTVPPSGEAVHGVLQEGHARPRGEPFSVNYEKHREQAIMLYDLLYFANDYDTFYKTACWARDRVNEGMFMYSFSIAVFHRDDMQGVMLPPPYEVYPYLFVDHDVIHMAQKYWMKNAGSGEHHSHVIPVNFTLRTQDHLLAYFTSDVNLNAFNTYYRYYYPSWYNTTLYGHNIDRRGEQFYYTYKQIYARYFLERLSNDLPDVYPFYYSKPVKSAYNPNLRYHNGEEMPVRPSNMYVTNFDLYYIADIKNYEKRVEDAIDFGYAFDEHMKPHSLYHDVHGMEYLADMIEGNMDSPNFYFYGSIYHMYHSMIGHIVDPYHKMGLAPSLEHPETVLRDPVFYQLWKRVDHLFQKYKNRLPRYTHDELAFEGVKVENVDVGKLYTYFEQYDMSLDMAVYVNNVDQISNVDVQLAVRLNHKPFTYNIEVSSDKAQDVYVAVFLGPKYDYLGREYDLNDRRHYFVEMDRFPYHVGAGKTVIERNSHDSNIIAPERDSYRTFYKKVQEAYEGKSQYYVDKGHNYCGYPENLLIPKGKKGGQAYTFYVIVTPYVKQDEHDFEPYNYKAFSYCGVGSERKYPDNKPLGYPFDRKIYSNDFYTPNMYFKDVIIFHKKYDEVGVQGH.

An N-terminal signal peptide occupies residues 1–16 (MKTALVFAAVVAFVAA). A glycan (N-linked (GlcNAc...) asparagine) is linked at N233.

Belongs to the hemocyanin family.

It is found in the secreted. It localises to the extracellular space. Functionally, larval storage protein (LSP) which may serve as a store of amino acids for synthesis of adult proteins. In Periplaneta americana (American cockroach), this protein is Allergen Cr-PI.